The following is an 864-amino-acid chain: Leucine--tRNA ligase (864 aa).

A 'HIGH' region motif is present at residues 42–52 (PYPSGKLHMGH). The 'KMSKS' region motif lies at 624-628 (KMSKS). An ATP-binding site is contributed by Lys-627.

It belongs to the class-I aminoacyl-tRNA synthetase family.

Its subcellular location is the cytoplasm. It carries out the reaction tRNA(Leu) + L-leucine + ATP = L-leucyl-tRNA(Leu) + AMP + diphosphate. This Burkholderia cenocepacia (strain HI2424) protein is Leucine--tRNA ligase.